Consider the following 186-residue polypeptide: Archaemetzincin (186 aa).

Position 136 (histidine 136) interacts with Zn(2+). The Proton acceptor role is filled by glutamate 137. 6 residues coordinate Zn(2+): histidine 140, histidine 146, cysteine 147, cysteine 152, cysteine 171, and cysteine 174.

The protein belongs to the peptidase M54 family. As to quaternary structure, monomer. It depends on Zn(2+) as a cofactor.

Probable zinc metalloprotease whose natural substrate is unknown. The protein is Archaemetzincin of Thermococcus kodakarensis (strain ATCC BAA-918 / JCM 12380 / KOD1) (Pyrococcus kodakaraensis (strain KOD1)).